Here is an 804-residue protein sequence, read N- to C-terminus: Leucine--tRNA ligase (804 aa).

The short motif at 40–51 is the 'HIGH' region element; it reads PYPSGQGLHVGH. Residues 576–580 carry the 'KMSKS' region motif; the sequence is KMSKS. Position 579 (Lys-579) interacts with ATP.

It belongs to the class-I aminoacyl-tRNA synthetase family.

It localises to the cytoplasm. It catalyses the reaction tRNA(Leu) + L-leucine + ATP = L-leucyl-tRNA(Leu) + AMP + diphosphate. This Enterococcus faecalis (strain ATCC 700802 / V583) protein is Leucine--tRNA ligase.